We begin with the raw amino-acid sequence, 301 residues long: Cytochrome c biogenesis protein CcsA (301 aa).

The next 8 membrane-spanning stretches (helical) occupy residues 13-33 (NNITFLTLLISLISYWLGLIF), 39-59 (VFYIGYGSTILACITITIILG), 73-93 (LYESLMFLTWGLLFSAIYLEY), 97-117 (LYLIGAIVSPISLFIVSFSTL), 146-166 (MLSYSTLIIGSLLAILYLVLI), 209-229 (TIGFGFPLLTIGIIAGAVWAN), 236-256 (WSWDPKETWALITWLVFAAYL), and 270-290 (AYLAALGFVVVWICYLGVNFL).

The protein belongs to the CcmF/CycK/Ccl1/NrfE/CcsA family. May interact with Ccs1.

It localises to the plastid. It is found in the chloroplast thylakoid membrane. In terms of biological role, required during biogenesis of c-type cytochromes (cytochrome c6 and cytochrome f) at the step of heme attachment. The protein is Cytochrome c biogenesis protein CcsA of Guillardia theta (Cryptophyte).